We begin with the raw amino-acid sequence, 1360 residues long: Probable inactive protein kinase DDB_G0270444 (1360 aa).

4 WD repeats span residues 44 to 83 (SSKR…IKQL), 109 to 152 (IRNI…AVYN), 166 to 205 (TTSA…IMGT), and 208 to 247 (GHSR…QITG). Positions 636-954 (EKSIQTYLSN…IEQALSHPFI (319 aa)) constitute a Protein kinase domain. Residues 959–979 (KQQQQQQQQKQQQQQQQQQQQ) are compositionally biased toward low complexity. Disordered regions lie at residues 959-989 (KQQQ…DSLT), 1258-1311 (IISE…VEEE), and 1331-1360 (EVEE…SNDF). Coiled-coil stretches lie at residues 1014-1269 (SKIK…QEGE) and 1297-1352 (NASD…QVED). Over residues 1291-1300 (LERDNKNASD) the composition is skewed to basic and acidic residues. Composition is skewed to acidic residues over residues 1301–1311 (HDDEQQFVEEE) and 1331–1354 (EVEE…EDDT).

The protein belongs to the protein kinase superfamily. CMGC Ser/Thr protein kinase family.

The polypeptide is Probable inactive protein kinase DDB_G0270444 (Dictyostelium discoideum (Social amoeba)).